The primary structure comprises 238 residues: Neuromodulin (238 aa).

The segment at 1–238 (MLCCMRRTKQ…EEPEADQEHA (238 aa)) is disordered. Residues Cys-3 and Cys-4 are each lipidated (S-palmitoyl cysteine). The segment covering 9–32 (KQVEKNDEDQKIEQDGIKPEDKAH) has biased composition (basic and acidic residues). An IQ domain is found at 31–60 (AHKAATKIQASFRGHITRKKLKGEKKDDAQ). A Phosphoserine; by PHK and PKC modification is found at Ser-41. A compositionally biased stretch (basic and acidic residues) spans 54–83 (EKKDDAQAAEAEANKKDEAPVADGVEKKGE). Residues 84-95 (GTTATEAAPATG) are compositionally biased toward low complexity. Positions 97-116 (KPDEPGKAGETPSEEKKGEG) are enriched in basic and acidic residues. Residues 119–130 (ATEQAAPQAPAS) are compositionally biased toward low complexity. The segment covering 139–154 (ETESATKASTDNSPSS) has biased composition (polar residues). 3 positions are modified to phosphoserine: Ser-151, Ser-153, and Ser-154. The span at 155-167 (KAEDAPAKEEPKQ) shows a compositional bias: basic and acidic residues. A compositionally biased stretch (low complexity) spans 168–199 (ADVPAAVTAAAATTPAAEDAAAKATAQPPTET). Phosphothreonine is present on Thr-181. Phosphoserine; by CK2 is present on residues Ser-202 and Ser-203. The segment covering 213 to 225 (DETKPKESARQDE) has biased composition (basic and acidic residues). Residues 226–238 (GKEEEPEADQEHA) show a composition bias toward acidic residues.

It belongs to the neuromodulin family. As to quaternary structure, identified in a complex containing FGFR4, NCAM1, CDH2, PLCG1, FRS2, SRC, SHC1, GAP43 and CTTN. Interacts (via IQ domain) with calmodulin. Binds calmodulin with a greater affinity in the absence of Ca(2+) than in its presence. Post-translationally, phosphorylated. Phosphorylation of this protein by a protein kinase C is specifically correlated with certain forms of synaptic plasticity. Palmitoylated by ZDHHC3. Palmitoylation is regulated by ARF6 and is essential for plasma membrane association and axonal and dendritic filopodia induction. Deacylated by LYPLA2.

It localises to the cell membrane. It is found in the cell projection. Its subcellular location is the growth cone membrane. The protein resides in the synapse. The protein localises to the filopodium membrane. It localises to the perikaryon. It is found in the dendrite. Its subcellular location is the axon. The protein resides in the cytoplasm. This protein is associated with nerve growth. It is a major component of the motile 'growth cones' that form the tips of elongating axons. Plays a role in axonal and dendritic filopodia induction. This chain is Neuromodulin (GAP43), found in Macaca fascicularis (Crab-eating macaque).